Here is an 878-residue protein sequence, read N- to C-terminus: Glycogen [starch] synthase (878 aa).

Lys-61 is a binding site for UDP-alpha-D-glucose. Disordered regions lie at residues 637 to 721 (PPKP…NVIP) and 746 to 878 (NEFK…KSLK). Composition is skewed to low complexity over residues 641–656 (ISRS…LKLS) and 666–676 (QQQQQQQQPQP). A compositionally biased stretch (polar residues) spans 677–692 (IGTTINLIPPSSNVSV). 4 stretches are compositionally biased toward low complexity: residues 693–715 (TPTT…ITTP), 746–781 (NEFK…AAAT), 795–830 (PNTS…NGKP), and 838–878 (TKSN…KSLK).

It belongs to the glycosyltransferase 3 family.

It carries out the reaction [(1-&gt;4)-alpha-D-glucosyl](n) + UDP-alpha-D-glucose = [(1-&gt;4)-alpha-D-glucosyl](n+1) + UDP + H(+). It functions in the pathway glycan biosynthesis; glycogen biosynthesis. In terms of biological role, catalyzes the formation of apha-1,4 glycosidic bonds adding glucose residue from UDPG to the growing chain of glycogen. The polypeptide is Glycogen [starch] synthase (glcS) (Dictyostelium discoideum (Social amoeba)).